The chain runs to 130 residues: Transcription antitermination protein NusB (130 aa).

This sequence belongs to the NusB family.

Functionally, involved in transcription antitermination. Required for transcription of ribosomal RNA (rRNA) genes. Binds specifically to the boxA antiterminator sequence of the ribosomal RNA (rrn) operons. In Bacillus velezensis (strain DSM 23117 / BGSC 10A6 / LMG 26770 / FZB42) (Bacillus amyloliquefaciens subsp. plantarum), this protein is Transcription antitermination protein NusB.